A 118-amino-acid chain; its full sequence is Large ribosomal subunit protein uL18 (118 aa).

The protein belongs to the universal ribosomal protein uL18 family. As to quaternary structure, part of the 50S ribosomal subunit; part of the 5S rRNA/L5/L18/L25 subcomplex. Contacts the 5S and 23S rRNAs.

Functionally, this is one of the proteins that bind and probably mediate the attachment of the 5S RNA into the large ribosomal subunit, where it forms part of the central protuberance. The polypeptide is Large ribosomal subunit protein uL18 (Zymomonas mobilis subsp. mobilis (strain ATCC 31821 / ZM4 / CP4)).